The sequence spans 504 residues: Signal transduction histidine-protein kinase/phosphatase MprB (504 aa).

The Cytoplasmic portion of the chain corresponds to 1–26 (MWWFRRRDRAPLRATSSLSLRWRVML). Residues 27–47 (LAMSMVAMVVVLMSFAVYAVI) traverse the membrane as a helical segment. Residues 48 to 163 (SAALYSDIDN…PTEAVMNKLR (116 aa)) lie on the Extracellular side of the membrane. Residues 164 to 184 (WVLLIVGGIGVAVAAVAGGMV) traverse the membrane as a helical segment. Over 185–504 (TRAGLRPVGR…SVESQSTRAT (320 aa)) the chain is Cytoplasmic. The HAMP domain maps to 186–238 (RAGLRPVGRLTEAAERVARTDDLRPIPVFGSDELARLTEAFNLMLRALAESRE). Residues 246–466 (DAGHELRTPL…SIYVLLPGRR (221 aa)) enclose the Histidine kinase domain. A Phosphohistidine; by autocatalysis modification is found at histidine 249. The segment at 471–504 (QLPGATAGARSTDIENSRGSANVISVESQSTRAT) is disordered. Residues 487–504 (SRGSANVISVESQSTRAT) are compositionally biased toward polar residues.

Mg(2+) is required as a cofactor. Requires Mn(2+) as cofactor. Post-translationally, autophosphorylated.

It localises to the cell membrane. It carries out the reaction ATP + protein L-histidine = ADP + protein N-phospho-L-histidine.. Member of the two-component regulatory system MprB/MprA which contributes to maintaining a balance among several systems involved in stress resistance and is required for establishment and maintenance of persistent infection in the host. In response to environmental signals MprB acts both as a membrane-associated protein kinase that undergoes autophosphorylation and subsequently transfers the phosphate to MprA, and a protein phosphatase that dephosphorylates phospho-MprA. This chain is Signal transduction histidine-protein kinase/phosphatase MprB (mprB), found in Mycobacterium tuberculosis (strain ATCC 25177 / H37Ra).